A 187-amino-acid chain; its full sequence is UPF0167 protein MT2352 (187 aa).

Belongs to the UPF0167 family.

This Mycobacterium tuberculosis (strain CDC 1551 / Oshkosh) protein is UPF0167 protein MT2352.